The following is a 165-amino-acid chain: Cyclic pyranopterin monophosphate synthase (165 aa).

Residues 83–85 and 120–121 each bind substrate; these read FCH and ME. D135 is a catalytic residue.

Belongs to the MoaC family. As to quaternary structure, homohexamer; trimer of dimers.

The enzyme catalyses (8S)-3',8-cyclo-7,8-dihydroguanosine 5'-triphosphate = cyclic pyranopterin phosphate + diphosphate. It participates in cofactor biosynthesis; molybdopterin biosynthesis. Catalyzes the conversion of (8S)-3',8-cyclo-7,8-dihydroguanosine 5'-triphosphate to cyclic pyranopterin monophosphate (cPMP). This chain is Cyclic pyranopterin monophosphate synthase, found in Xanthomonas axonopodis pv. citri (strain 306).